The chain runs to 142 residues: Hemoglobin subunit alpha (142 aa).

Residues 2–142 (VLSPADKTNI…VSTVLTSKYR (141 aa)) enclose the Globin domain. Residue Ser-4 is modified to Phosphoserine. Lys-8 is modified (N6-succinyllysine). A Phosphothreonine modification is found at Thr-9. Lys-12 bears the N6-succinyllysine mark. Lys-17 is modified (N6-acetyllysine; alternate). Position 17 is an N6-succinyllysine; alternate (Lys-17). Position 25 is a phosphotyrosine (Tyr-25). Phosphoserine is present on Ser-36. The residue at position 41 (Lys-41) is an N6-succinyllysine. At Ser-50 the chain carries Phosphoserine. Residue His-59 participates in O2 binding. His-88 is a heme b binding site. Residue Ser-103 is modified to Phosphoserine. Thr-109 bears the Phosphothreonine mark. The residue at position 125 (Ser-125) is a Phosphoserine. Thr-135 and Thr-138 each carry phosphothreonine. Position 139 is a phosphoserine (Ser-139).

This sequence belongs to the globin family. Heterotetramer of two alpha chains and two beta chains. As to expression, red blood cells.

Involved in oxygen transport from the lung to the various peripheral tissues. Functionally, hemopressin acts as an antagonist peptide of the cannabinoid receptor CNR1. Hemopressin-binding efficiently blocks cannabinoid receptor CNR1 and subsequent signaling. The sequence is that of Hemoglobin subunit alpha (HBA) from Canis latrans (Coyote).